The sequence spans 396 residues: 8-amino-7-oxononanoate synthase (396 aa).

Arg31 contributes to the substrate binding site. 118-119 (GY) is a pyridoxal 5'-phosphate binding site. His143 serves as a coordination point for substrate. Pyridoxal 5'-phosphate is bound by residues Ser189, His217, and Thr245. N6-(pyridoxal phosphate)lysine is present on Lys248. Thr362 contacts substrate.

The protein belongs to the class-II pyridoxal-phosphate-dependent aminotransferase family. BioF subfamily. In terms of assembly, homodimer. It depends on pyridoxal 5'-phosphate as a cofactor.

The enzyme catalyses 6-carboxyhexanoyl-[ACP] + L-alanine + H(+) = (8S)-8-amino-7-oxononanoate + holo-[ACP] + CO2. It participates in cofactor biosynthesis; biotin biosynthesis. Functionally, catalyzes the decarboxylative condensation of pimeloyl-[acyl-carrier protein] and L-alanine to produce 8-amino-7-oxononanoate (AON), [acyl-carrier protein], and carbon dioxide. The chain is 8-amino-7-oxononanoate synthase from Methylobacillus flagellatus (strain ATCC 51484 / DSM 6875 / VKM B-1610 / KT).